Consider the following 431-residue polypeptide: Enolase (431 aa).

Glutamine 168 is a (2R)-2-phosphoglycerate binding site. The Proton donor role is filled by glutamate 210. Mg(2+)-binding residues include aspartate 247, glutamate 291, and aspartate 318. Lysine 343, arginine 372, serine 373, and lysine 394 together coordinate (2R)-2-phosphoglycerate. The active-site Proton acceptor is lysine 343.

It belongs to the enolase family. As to quaternary structure, component of the RNA degradosome, a multiprotein complex involved in RNA processing and mRNA degradation. It depends on Mg(2+) as a cofactor.

The protein localises to the cytoplasm. It localises to the secreted. The protein resides in the cell surface. The enzyme catalyses (2R)-2-phosphoglycerate = phosphoenolpyruvate + H2O. It functions in the pathway carbohydrate degradation; glycolysis; pyruvate from D-glyceraldehyde 3-phosphate: step 4/5. In terms of biological role, catalyzes the reversible conversion of 2-phosphoglycerate (2-PG) into phosphoenolpyruvate (PEP). It is essential for the degradation of carbohydrates via glycolysis. This is Enolase from Acinetobacter baumannii (strain AYE).